A 141-amino-acid chain; its full sequence is Hemoglobin subunit alpha-D (141 aa).

Residues 1–141 (MLTEDEKQLI…VSAVLAEKYR (141 aa)) form the Globin domain. Heme b-binding residues include histidine 58 and histidine 87.

Belongs to the globin family. Heterotetramer of two alpha-D chains and two beta chains. In terms of tissue distribution, red blood cells.

Involved in oxygen transport from the lung to the various peripheral tissues. The chain is Hemoglobin subunit alpha-D (HBAD) from Chelonoidis carbonarius (Red-footed tortoise).